The following is a 453-amino-acid chain: Gamma-aminobutyric acid receptor subunit alpha-6 (453 aa).

A signal peptide spans 1-19 (MVLLLPWLFIILWLENAQA). The Extracellular portion of the chain corresponds to 20–243 (QLEDEGNFYS…FHLQRKMGYF (224 aa)). The N-linked (GlcNAc...) asparagine glycan is linked to Asn31. Residue Arg84 coordinates 4-aminobutanoate. Asn128 and Asn141 each carry an N-linked (GlcNAc...) asparagine glycan. Thr147 lines the 4-aminobutanoate pocket. A disulfide bridge connects residues Cys156 and Cys170. A helical transmembrane segment spans residues 244-264 (MIQIYTPCIMTVILSQVSFWI). The Cytoplasmic portion of the chain corresponds to 265–270 (NKESVP). A helical membrane pass occupies residues 271–290 (ARTVFGITTVLTMTTLSISA). The Extracellular portion of the chain corresponds to 291–304 (RHSLPKVSYATAMD). The helical transmembrane segment at 305 to 325 (WFIAVCFAFVFSALIEFAAVN) threads the bilayer. Residues 326-422 (YFTNLQSQKA…GTSKIDQYSR (97 aa)) are Cytoplasmic-facing. Phosphoserine is present on Ser375. Residues 423–443 (ILFPVAFAGFNLVYWIVYLSK) form a helical membrane-spanning segment. At 444-453 (DTMEVSSTVE) the chain is on the extracellular side.

Belongs to the ligand-gated ion channel (TC 1.A.9) family. Gamma-aminobutyric acid receptor (TC 1.A.9.5) subfamily. GABRA6 sub-subfamily. Heteropentamer, formed by a combination of alpha (GABRA1-6), beta (GABRB1-3), gamma (GABRG1-3), delta (GABRD), epsilon (GABRE), rho (GABRR1-3), pi (GABRP) and theta (GABRQ) chains, each subunit exhibiting distinct physiological and pharmacological properties. Binds UBQLN1. In terms of tissue distribution, expressed in brain, in cerebellar granule cells.

Its subcellular location is the postsynaptic cell membrane. It localises to the cell membrane. It carries out the reaction chloride(in) = chloride(out). Functionally, alpha subunit of the heteropentameric ligand-gated chloride channel gated by gamma-aminobutyric acid (GABA), a major inhibitory neurotransmitter in the brain. GABA-gated chloride channels, also named GABA(A) receptors (GABAAR), consist of five subunits arranged around a central pore and contain GABA active binding site(s) located at the alpha and beta subunit interface(s). When activated by GABA, GABAARs selectively allow the flow of chloride anions across the cell membrane down their electrochemical gradient. Alpha-6/GABRA6 subunits are found at both synaptic and extrasynaptic sites. Chloride influx into the postsynaptic neuron following GABAAR opening decreases the neuron ability to generate a new action potential, thereby reducing nerve transmission. Extrasynaptic alpha-6-containing receptors contribute to the tonic GABAergic inhibition. Alpha-6 subunits are also present on glutamatergic synapses. In Mus musculus (Mouse), this protein is Gamma-aminobutyric acid receptor subunit alpha-6.